A 294-amino-acid chain; its full sequence is Diaminopimelate epimerase (294 aa).

Substrate is bound by residues N11 and N78. The Proton donor role is filled by C87. Residues G88 to N89, N167, N203, and E221 to R222 each bind substrate. Catalysis depends on C230, which acts as the Proton acceptor. Residue G231–T232 participates in substrate binding.

Belongs to the diaminopimelate epimerase family. In terms of assembly, homodimer.

It localises to the cytoplasm. The enzyme catalyses (2S,6S)-2,6-diaminopimelate = meso-2,6-diaminopimelate. The protein operates within amino-acid biosynthesis; L-lysine biosynthesis via DAP pathway; DL-2,6-diaminopimelate from LL-2,6-diaminopimelate: step 1/1. Catalyzes the stereoinversion of LL-2,6-diaminopimelate (L,L-DAP) to meso-diaminopimelate (meso-DAP), a precursor of L-lysine and an essential component of the bacterial peptidoglycan. The sequence is that of Diaminopimelate epimerase from Mycobacterium avium (strain 104).